Consider the following 276-residue polypeptide: Large ribosomal subunit protein uL2 (276 aa).

Positions 225 to 276 (VMNPVDHPHGGGEGKTAAGRDPVSPWGTPTKGYRTRSNKRTDSMIVQKRHKR) are disordered.

The protein belongs to the universal ribosomal protein uL2 family. Part of the 50S ribosomal subunit. Forms a bridge to the 30S subunit in the 70S ribosome.

In terms of biological role, one of the primary rRNA binding proteins. Required for association of the 30S and 50S subunits to form the 70S ribosome, for tRNA binding and peptide bond formation. It has been suggested to have peptidyltransferase activity; this is somewhat controversial. Makes several contacts with the 16S rRNA in the 70S ribosome. The protein is Large ribosomal subunit protein uL2 of Cupriavidus taiwanensis (strain DSM 17343 / BCRC 17206 / CCUG 44338 / CIP 107171 / LMG 19424 / R1) (Ralstonia taiwanensis (strain LMG 19424)).